We begin with the raw amino-acid sequence, 223 residues long: dITP/XTP pyrophosphatase (223 aa).

9–14 provides a ligand contact to substrate; the sequence is TTNQNK. Catalysis depends on Asp71, which acts as the Proton acceptor. Asp71 is a binding site for Mg(2+). Residues Ser72, 152–155, Lys175, and 180–181 contribute to the substrate site; these read FGYD and HR. A disordered region spans residues 203–223; sequence LSEEKPAKPDHSEFEGNDWSK.

Belongs to the HAM1 NTPase family. As to quaternary structure, homodimer. It depends on Mg(2+) as a cofactor.

It carries out the reaction XTP + H2O = XMP + diphosphate + H(+). It catalyses the reaction dITP + H2O = dIMP + diphosphate + H(+). The catalysed reaction is ITP + H2O = IMP + diphosphate + H(+). Its function is as follows. Pyrophosphatase that catalyzes the hydrolysis of nucleoside triphosphates to their monophosphate derivatives, with a high preference for the non-canonical purine nucleotides XTP (xanthosine triphosphate), dITP (deoxyinosine triphosphate) and ITP. Seems to function as a house-cleaning enzyme that removes non-canonical purine nucleotides from the nucleotide pool, thus preventing their incorporation into DNA/RNA and avoiding chromosomal lesions. The sequence is that of dITP/XTP pyrophosphatase from Desulfotalea psychrophila (strain LSv54 / DSM 12343).